The sequence spans 110 residues: Large ribosomal subunit protein P1 (110 aa).

At A2 the chain carries Blocked amino end (Ala). A compositionally biased stretch (low complexity) spans 69–83; it reads AAPAAGGAAAATEAP. The interval 69–110 is disordered; it reads AAPAAGGAAAATEAPAAKEEKKEEKKEESEEEDEDMGFGLFD. The span at 84–96 shows a compositional bias: basic and acidic residues; sequence AAKEEKKEEKKEE. S97 carries the phosphoserine; in form eL12'-P modification.

Part of the ribosomal stalk of the large ribosomal subunit; P1 and P2 exist as dimers which assemble on the P0 scaffold. Post-translationally, phosphorylation of Ser-97 converts eL12' to eL12'-P.

Its function is as follows. Plays an important role in the elongation step of protein synthesis. The protein is Large ribosomal subunit protein P1 of Artemia salina (Brine shrimp).